The sequence spans 279 residues: Bis(5'-nucleosyl)-tetraphosphatase, symmetrical (279 aa).

Belongs to the Ap4A hydrolase family.

It catalyses the reaction P(1),P(4)-bis(5'-adenosyl) tetraphosphate + H2O = 2 ADP + 2 H(+). Its function is as follows. Hydrolyzes diadenosine 5',5'''-P1,P4-tetraphosphate to yield ADP. The sequence is that of Bis(5'-nucleosyl)-tetraphosphatase, symmetrical from Edwardsiella ictaluri (strain 93-146).